A 185-amino-acid polypeptide reads, in one-letter code: Photosystem I assembly protein Ycf4 (185 aa).

A run of 2 helical transmembrane segments spans residues 22–42 (FFFA…GFSS) and 57–77 (IIFV…LFFS).

It belongs to the Ycf4 family.

It is found in the plastid. The protein resides in the chloroplast thylakoid membrane. Its function is as follows. Seems to be required for the assembly of the photosystem I complex. The sequence is that of Photosystem I assembly protein Ycf4 from Welwitschia mirabilis (Tree tumbo).